Reading from the N-terminus, the 196-residue chain is Probable splicing factor, arginine/serine-rich 4 (196 aa).

Positions 19-97 constitute an RRM domain; the sequence is TSLKIDNLSY…RELRVTLAKY (79 aa). A compositionally biased stretch (basic and acidic residues) spans 91 to 106; that stretch reads RVTLAKYDRPSDERGG. The disordered stretch occupies residues 91–196; it reads RVTLAKYDRP…SPSRSRSNSR (106 aa). Residues 112–141 show a composition bias toward basic residues; it reads GRRRSRSPRRRSRSPRYSRSRSPRRSRSRT. Composition is skewed to basic and acidic residues over residues 145-160 and 167-176; these read PSRDRRDSPDRRDNSR and PPREDGSPKE. Over residues 184–196 the composition is skewed to low complexity; it reads ASRSPSRSRSNSR.

This sequence belongs to the splicing factor SR family. Extensively phosphorylated on serine residues in the RS domain.

Its subcellular location is the nucleus. Its function is as follows. May play a functionally redundant role in embryogenesis. The sequence is that of Probable splicing factor, arginine/serine-rich 4 (rsp-4) from Caenorhabditis elegans.